We begin with the raw amino-acid sequence, 70 residues long: Cold shock-like protein CspG (70 aa).

The CSD domain maps to G7–V67.

It is found in the cytoplasm. In Escherichia coli O157:H7, this protein is Cold shock-like protein CspG (cspG).